The primary structure comprises 179 residues: Adenine phosphoribosyltransferase (179 aa).

The protein belongs to the purine/pyrimidine phosphoribosyltransferase family. In terms of assembly, homodimer.

It localises to the cytoplasm. The enzyme catalyses AMP + diphosphate = 5-phospho-alpha-D-ribose 1-diphosphate + adenine. It participates in purine metabolism; AMP biosynthesis via salvage pathway; AMP from adenine: step 1/1. Its function is as follows. Catalyzes a salvage reaction resulting in the formation of AMP, that is energically less costly than de novo synthesis. The polypeptide is Adenine phosphoribosyltransferase (Helicobacter pylori (strain G27)).